The chain runs to 258 residues: uncharacterized protein (258 aa).

4 helical membrane passes run 33–53, 59–79, 88–108, and 140–160; these read LFVIFQVIISIVLLSLSVTTN, FDSWYYFASHLILSLFGIFVF, LLYLYVILLSGLLITASFSFF, and IIALIVVEGVALHPNLSWLIQ. The segment at 237–258 is disordered; it reads NNKINSELQPPSILNKNSKPIE. Over residues 242–258 the composition is skewed to polar residues; it reads SELQPPSILNKNSKPIE.

The protein resides in the membrane. This is an uncharacterized protein from Dictyostelium discoideum (Social amoeba).